The sequence spans 71 residues: MKKTFYHYMMKHRAPLVKNEISDLAEAIYDDLSFPKQSEDYHEISSYLECSGLIESMSIFDKAWDLYLQER.

The protein belongs to the UPF0346 family.

The chain is UPF0346 protein Bcer98_1690 from Bacillus cytotoxicus (strain DSM 22905 / CIP 110041 / 391-98 / NVH 391-98).